Here is a 450-residue protein sequence, read N- to C-terminus: Chromosomal replication initiator protein DnaA (450 aa).

The tract at residues 1-84 is domain I, interacts with DnaA modulators; sequence MENIHDLWDR…AVKFIIPPNQ (84 aa). The domain II stretch occupies residues 84-111; the sequence is QDDEELEFQSSKKKQRKPYEETNDFPQS. Positions 89–108 are disordered; sequence LEFQSSKKKQRKPYEETNDF. The tract at residues 112–328 is domain III, AAA+ region; it reads MLNPKYTFDT…GALIRVVAYS (217 aa). ATP is bound by residues Gly-156, Gly-158, Lys-159, and Thr-160. A domain IV, binds dsDNA region spans residues 329 to 450; that stretch reads SLINKEITAD…QEIQEKLKQL (122 aa).

This sequence belongs to the DnaA family. In terms of assembly, oligomerizes as a right-handed, spiral filament on DNA at oriC.

The protein resides in the cytoplasm. In terms of biological role, plays an essential role in the initiation and regulation of chromosomal replication. ATP-DnaA binds to the origin of replication (oriC) to initiate formation of the DNA replication initiation complex once per cell cycle. Binds the DnaA box (a 9 base pair repeat at the origin) and separates the double-stranded (ds)DNA. Forms a right-handed helical filament on oriC DNA; dsDNA binds to the exterior of the filament while single-stranded (ss)DNA is stabiized in the filament's interior. The ATP-DnaA-oriC complex binds and stabilizes one strand of the AT-rich DNA unwinding element (DUE), permitting loading of DNA polymerase. After initiation quickly degrades to an ADP-DnaA complex that is not apt for DNA replication. Binds acidic phospholipids. This Geobacillus kaustophilus (strain HTA426) protein is Chromosomal replication initiator protein DnaA.